The sequence spans 261 residues: High-affinity zinc uptake system membrane protein ZnuB (261 aa).

7 helical membrane passes run 5 to 27, 48 to 70, 85 to 107, 128 to 150, 172 to 194, 215 to 234, and 238 to 257; these read FFFG…LFII, FAVL…FGML, ILGI…ISNF, IVIL…DLML, ILIF…LIAI, AFFS…LMSV, and LAIS…ISNL.

This sequence belongs to the ABC-3 integral membrane protein family.

Its subcellular location is the cell membrane. Its function is as follows. Involved in the high-affinity zinc uptake transport system. The sequence is that of High-affinity zinc uptake system membrane protein ZnuB (znuB) from Buchnera aphidicola subsp. Baizongia pistaciae (strain Bp).